The chain runs to 546 residues: Chaperonin GroEL (546 aa).

Residues 30 to 33 (TLGP), Lys51, 87 to 91 (DGTTT), Gly415, 479 to 481 (NAA), and Asp495 each bind ATP.

The protein belongs to the chaperonin (HSP60) family. In terms of assembly, forms a cylinder of 14 subunits composed of two heptameric rings stacked back-to-back. Interacts with the co-chaperonin GroES.

The protein resides in the cytoplasm. The catalysed reaction is ATP + H2O + a folded polypeptide = ADP + phosphate + an unfolded polypeptide.. Together with its co-chaperonin GroES, plays an essential role in assisting protein folding. The GroEL-GroES system forms a nano-cage that allows encapsulation of the non-native substrate proteins and provides a physical environment optimized to promote and accelerate protein folding. The polypeptide is Chaperonin GroEL (Allochromatium vinosum (Chromatium vinosum)).